Reading from the N-terminus, the 203-residue chain is Alpha-amylase/subtilisin inhibitor (203 aa).

A compositionally biased stretch (polar residues) spans 1–12; sequence MGSRRAGSSSSP. An N-terminal signal peptide occupies residues 1 to 22; it reads MGSRRAGSSSSPLFWPAPPSRA. The disordered stretch occupies residues 1-34; sequence MGSRRAGSSSSPLFWPAPPSRAADPPPVHDTDGH. A compositionally biased stretch (pro residues) spans 15-26; it reads WPAPPSRAADPP. Disulfide bonds link cysteine 65–cysteine 112 and cysteine 166–cysteine 170.

Belongs to the protease inhibitor I3 (leguminous Kunitz-type inhibitor) family.

This protein inhibits independently subtilisin and alpha-amylase. This is Alpha-amylase/subtilisin inhibitor from Hordeum vulgare (Barley).